The chain runs to 479 residues: Anaerobic nitric oxide reductase flavorubredoxin (479 aa).

The interval 30-210 (LRGSSYNSYL…PFSRLVTPKI (181 aa)) is zinc metallo-hydrolase. Positions 79, 81, 83, 147, 166, and 227 each coordinate Fe cation. A Flavodoxin-like domain is found at 254-393 (ITIFYDTMSN…LCREHGREIA (140 aa)). FMN is bound by residues 260 to 264 (TMSNN) and 342 to 369 (AFGS…EMSL). The 52-residue stretch at 423-474 (GPRMQCSVCQWIYDPAKGEPMQDVAPGTPWSEVPDNFLCPECSLGKDVFEEL) folds into the Rubredoxin-like domain. Fe cation contacts are provided by cysteine 428, cysteine 431, cysteine 461, and cysteine 464.

In the N-terminal section; belongs to the zinc metallo-hydrolase group 3 family. In terms of assembly, homotetramer. It depends on Fe cation as a cofactor. The cofactor is FMN.

It localises to the cytoplasm. It functions in the pathway nitrogen metabolism; nitric oxide reduction. Its function is as follows. Anaerobic nitric oxide reductase; uses NADH to detoxify nitric oxide (NO), protecting several 4Fe-4S NO-sensitive enzymes. Has at least 2 reductase partners, only one of which (NorW, flavorubredoxin reductase) has been identified. NO probably binds to the di-iron center; electrons enter from the NorW at rubredoxin and are transferred sequentially to the FMN center and the di-iron center. Also able to function as an aerobic oxygen reductase. The chain is Anaerobic nitric oxide reductase flavorubredoxin from Escherichia coli O139:H28 (strain E24377A / ETEC).